The chain runs to 82 residues: Escargot/snail protein homolog (82 aa).

4 C2H2-type zinc fingers span residues 1–5 (HLQFH), 18–40 (FSCK…IRTH), 44–66 (CKCD…IRTH), and 72–82 (FSCQHCHRAFA).

This sequence belongs to the snail C2H2-type zinc-finger protein family.

It is found in the nucleus. The chain is Escargot/snail protein homolog from Bradysia coprophila (Dark-winged fungus gnat).